A 290-amino-acid polypeptide reads, in one-letter code: Light-independent protochlorophyllide reductase iron-sulfur ATP-binding protein (290 aa).

Residues 10-15 (GIGKST) and K39 each bind ATP. Residue S14 participates in Mg(2+) binding. Residues C95 and C129 each coordinate [4Fe-4S] cluster. 180 to 181 (NR) contributes to the ATP binding site.

It belongs to the NifH/BchL/ChlL family. Homodimer. Protochlorophyllide reductase is composed of three subunits; ChlL, ChlN and ChlB. It depends on [4Fe-4S] cluster as a cofactor.

It is found in the plastid. The protein localises to the chloroplast. The enzyme catalyses chlorophyllide a + oxidized 2[4Fe-4S]-[ferredoxin] + 2 ADP + 2 phosphate = protochlorophyllide a + reduced 2[4Fe-4S]-[ferredoxin] + 2 ATP + 2 H2O. It participates in porphyrin-containing compound metabolism; chlorophyll biosynthesis (light-independent). In terms of biological role, component of the dark-operative protochlorophyllide reductase (DPOR) that uses Mg-ATP and reduced ferredoxin to reduce ring D of protochlorophyllide (Pchlide) to form chlorophyllide a (Chlide). This reaction is light-independent. The L component serves as a unique electron donor to the NB-component of the complex, and binds Mg-ATP. This chain is Light-independent protochlorophyllide reductase iron-sulfur ATP-binding protein, found in Angiopteris evecta (Mule's foot fern).